The chain runs to 429 residues: Phosphomethylpyrimidine synthase 1 (429 aa).

Residues Asn-65, Met-94, Tyr-123, His-162, 184-186 (SRG), 225-228 (DGLR), and Glu-264 contribute to the substrate site. Position 268 (His-268) interacts with Zn(2+). Tyr-291 serves as a coordination point for substrate. His-332 is a Zn(2+) binding site. Residues Cys-408, Cys-411, and Cys-415 each contribute to the [4Fe-4S] cluster site.

This sequence belongs to the ThiC family. It depends on [4Fe-4S] cluster as a cofactor.

The enzyme catalyses 5-amino-1-(5-phospho-beta-D-ribosyl)imidazole + S-adenosyl-L-methionine = 4-amino-2-methyl-5-(phosphooxymethyl)pyrimidine + CO + 5'-deoxyadenosine + formate + L-methionine + 3 H(+). Its pathway is cofactor biosynthesis; thiamine diphosphate biosynthesis. Its function is as follows. Catalyzes the synthesis of the hydroxymethylpyrimidine phosphate (HMP-P) moiety of thiamine from aminoimidazole ribotide (AIR) in a radical S-adenosyl-L-methionine (SAM)-dependent reaction. The protein is Phosphomethylpyrimidine synthase 1 of Methanosphaera stadtmanae (strain ATCC 43021 / DSM 3091 / JCM 11832 / MCB-3).